The chain runs to 314 residues: Dihydroorotate dehydrogenase (fumarate) (314 aa).

Substrate contacts are provided by residues K46, 70-74 (NSMGL), and N130. 46–47 (KS) is a binding site for FMN. N130 contacts FMN. Catalysis depends on nucleophile residues S132 and C133. Positions 167 and 195 each coordinate FMN. 196-197 (NS) lines the substrate pocket. FMN-binding positions include G224, 252-253 (GG), and 274-275 (GT).

It belongs to the dihydroorotate dehydrogenase family. Type 1 subfamily. In terms of assembly, homodimer. It depends on FMN as a cofactor.

The protein localises to the cytoplasm. The enzyme catalyses (S)-dihydroorotate + fumarate = orotate + succinate. It participates in pyrimidine metabolism; UMP biosynthesis via de novo pathway. With respect to regulation, the activity is independent of the presence of oxygen. Its function is as follows. Catalyzes the conversion of dihydroorotate to orotate with fumarate as the electron acceptor. This is Dihydroorotate dehydrogenase (fumarate) (URA1) from Lachancea kluyveri (strain ATCC 58438 / CBS 3082 / BCRC 21498 / NBRC 1685 / JCM 7257 / NCYC 543 / NRRL Y-12651) (Yeast).